Here is a 465-residue protein sequence, read N- to C-terminus: Probable Xaa-Pro aminopeptidase pepP (465 aa).

D263, D274, E397, and E437 together coordinate Mn(2+).

It belongs to the peptidase M24B family. It depends on Mn(2+) as a cofactor.

It catalyses the reaction Release of any N-terminal amino acid, including proline, that is linked to proline, even from a dipeptide or tripeptide.. Functionally, catalyzes the removal of a penultimate prolyl residue from the N-termini of peptides. This chain is Probable Xaa-Pro aminopeptidase pepP (pepP), found in Emericella nidulans (strain FGSC A4 / ATCC 38163 / CBS 112.46 / NRRL 194 / M139) (Aspergillus nidulans).